The following is a 1225-amino-acid chain: uncharacterized protein (1225 aa).

A compositionally biased stretch (polar residues) spans 1-15 (MSSQAEPSKGASNAD). Positions 1 to 104 (MSSQAEPSKG…VDGVPTRPVS (104 aa)) are disordered. Positions 16–25 (PNEKVEKMHL) are enriched in basic and acidic residues. Positions 43 to 65 (ASPSDKNNLNPQSAGVSEVQVQD) are enriched in polar residues. A helical transmembrane segment spans residues 167-187 (FLFGYLRFGFLSLFIIMAVCI). The SMP-LTD domain maps to 217 to 422 (DSETVTWLNT…SPNVYELDIE (206 aa)). 3 consecutive C2 domains span residues 413 to 534 (SPNV…NDAF), 559 to 668 (DSGE…LLWF), and 685 to 803 (KPAQ…GALM). Ser-843 is modified (phosphoserine). Residues 867 to 890 (PESQKTPTAVDNTSTSRGSTSVKT) form a disordered region. A compositionally biased stretch (polar residues) spans 869 to 890 (SQKTPTAVDNTSTSRGSTSVKT). One can recognise a C2 4 domain in the interval 1019 to 1137 (RLTPVPVKLE…QQQQQTNYEI (119 aa)). Asp-1053, Asp-1059, Asp-1107, Asp-1109, and Asp-1115 together coordinate Ca(2+).

The cofactor is Ca(2+).

It localises to the endoplasmic reticulum membrane. This is an uncharacterized protein from Schizosaccharomyces pombe (strain 972 / ATCC 24843) (Fission yeast).